We begin with the raw amino-acid sequence, 467 residues long: Dynactin subunit 4 (467 aa).

N-acetylalanine is present on Ala2. A Glycyl lysine isopeptide (Lys-Gly) (interchain with G-Cter in SUMO2) cross-link involves residue Lys222. Position 414 is a phosphothreonine (Thr414).

The protein belongs to the dynactin subunit 4 family. In terms of assembly, subunit of dynactin, a multiprotein complex part of a tripartite complex with dynein and a adapter, such as BICDL1, BICD2 or HOOK3. The dynactin complex is built around ACTR1A/ACTB filament and consists of an actin-related filament composed of a shoulder domain, a pointed end and a barbed end. Its length is defined by its flexible shoulder domain. The soulder is composed of 2 DCTN1 subunits, 4 DCTN2 and 2 DCTN3. The 4 DCNT2 (via N-terminus) bind the ACTR1A filament and act as molecular rulers to determine the length. The pointed end is important for binding dynein-dynactin cargo adapters. Consists of 4 subunits: ACTR10, DCNT4, DCTN5 and DCTN6. The barbed end is composed of a CAPZA1:CAPZB heterodimers, which binds ACTR1A/ACTB filament and dynactin and stabilizes dynactin. Interacts with ATP7B, but not ATP7A, in a copper-dependent manner. Interacts with ANK2; this interaction is required for localization at costameres. Interacts with N4BP2L1.

Its subcellular location is the cytoplasm. It localises to the cytoskeleton. The protein resides in the microtubule organizing center. The protein localises to the centrosome. It is found in the stress fiber. Its subcellular location is the cell cortex. It localises to the myofibril. The protein resides in the sarcomere. In terms of biological role, part of the dynactin complex that activates the molecular motor dynein for ultra-processive transport along microtubules. Together with dynein is involved in spindle assembly and cytokinesis. This chain is Dynactin subunit 4 (DCTN4), found in Sus scrofa (Pig).